Here is a 113-residue protein sequence, read N- to C-terminus: Large ribosomal subunit protein bL19 (113 aa).

The protein belongs to the bacterial ribosomal protein bL19 family.

Its function is as follows. This protein is located at the 30S-50S ribosomal subunit interface and may play a role in the structure and function of the aminoacyl-tRNA binding site. The sequence is that of Large ribosomal subunit protein bL19 from Moorella thermoacetica (strain ATCC 39073 / JCM 9320).